Consider the following 24-residue polypeptide: Unknown protein NF004 from 2D-PAGE (24 aa).

The sequence is that of Unknown protein NF004 from 2D-PAGE from Naegleria fowleri (Brain eating amoeba).